A 156-amino-acid chain; its full sequence is FUN14 domain-containing protein 1 (156 aa).

Positions 19 to 22 match the YXXL motif; that stretch reads YEVL. The next 3 membrane-spanning stretches (helical) occupy residues 49 to 69, 76 to 96, and 135 to 155; these read YSVA…GFLF, AATA…SGYV, and FIKQ…LGLA.

This sequence belongs to the FUN14 family.

Its subcellular location is the mitochondrion outer membrane. Its function is as follows. Acts as an activator of hypoxia-induced mitophagy, an important mechanism for mitochondrial quality control. This Gallus gallus (Chicken) protein is FUN14 domain-containing protein 1 (FUNDC1).